A 136-amino-acid polypeptide reads, in one-letter code: Small nuclear ribonucleoprotein Sm D3 (136 aa).

Residues 6 to 78 (VPIKILHEAE…IRFMILPDML (73 aa)) form the Sm domain. The disordered stretch occupies residues 98–136 (GLGGLDQRGRGRGTAFRRPMGRGGPRGMSRPGGAPTFRG).

Belongs to the snRNP core protein family.

Its subcellular location is the nucleus. It localises to the cytoplasm. The protein localises to the cytosol. Plays a role in pre-mRNA splicing as a core component of the spliceosomal U1, U2, U4 and U5 small nuclear ribonucleoproteins (snRNPs), the building blocks of the spliceosome. This chain is Small nuclear ribonucleoprotein Sm D3 (snr-1), found in Caenorhabditis elegans.